Here is a 121-residue protein sequence, read N- to C-terminus: Large ribosomal subunit protein uL18 (121 aa).

It belongs to the universal ribosomal protein uL18 family. As to quaternary structure, part of the 50S ribosomal subunit; part of the 5S rRNA/L5/L18/L25 subcomplex. Contacts the 5S and 23S rRNAs.

In terms of biological role, this is one of the proteins that bind and probably mediate the attachment of the 5S RNA into the large ribosomal subunit, where it forms part of the central protuberance. The sequence is that of Large ribosomal subunit protein uL18 from Burkholderia ambifaria (strain MC40-6).